The sequence spans 184 residues: MIFASSNRHKYEEFRRMLSDLIDLKFLEVDYLEPQGEDTREIVVTSAKWLSNYIREPFFIEDSGLFIEALNGFPGPYSSYVFKKIGNEGVLKLMNGVENRRAFFISVIALSYGRGIEVFEGRVQGTIAREVRGGGWGFDPIFIPNGSNKTYGELGDEKDRFSHRGASCRKLREFLMRFGSDRLP.

5–10 (SSNRHK) serves as a coordination point for substrate. Mg(2+) contacts are provided by E33 and D62. D62 serves as the catalytic Proton acceptor. Substrate contacts are provided by residues S63, 136 to 139 (WGFD), K158, and 163 to 164 (HR).

This sequence belongs to the HAM1 NTPase family. As to quaternary structure, homodimer. It depends on Mg(2+) as a cofactor.

It carries out the reaction XTP + H2O = XMP + diphosphate + H(+). It catalyses the reaction dITP + H2O = dIMP + diphosphate + H(+). The enzyme catalyses ITP + H2O = IMP + diphosphate + H(+). In terms of biological role, pyrophosphatase that catalyzes the hydrolysis of nucleoside triphosphates to their monophosphate derivatives, with a high preference for the non-canonical purine nucleotides XTP (xanthosine triphosphate), dITP (deoxyinosine triphosphate) and ITP. Seems to function as a house-cleaning enzyme that removes non-canonical purine nucleotides from the nucleotide pool, thus preventing their incorporation into DNA/RNA and avoiding chromosomal lesions. The chain is dITP/XTP pyrophosphatase from Korarchaeum cryptofilum (strain OPF8).